Consider the following 492-residue polypeptide: GTPase Der (492 aa).

2 consecutive EngA-type G domains span residues 3-166 and 205-378; these read PVVA…MDDV and IKLA…DSST. Residues 9–16, 56–60, 118–121, 211–218, 258–262, and 323–326 contribute to the GTP site; these read GRPNVGKS, DTGGI, NKTD, DTAGV, and NKWD. The KH-like domain occupies 379–463; the sequence is RRVSTALLTR…PIRIQFKEGA (85 aa).

It belongs to the TRAFAC class TrmE-Era-EngA-EngB-Septin-like GTPase superfamily. EngA (Der) GTPase family. Associates with the 50S ribosomal subunit.

Its function is as follows. GTPase that plays an essential role in the late steps of ribosome biogenesis. The chain is GTPase Der from Cronobacter sakazakii (strain ATCC BAA-894) (Enterobacter sakazakii).